The chain runs to 258 residues: MDSFCLHHYQFSSRLILGTGRYSSPSLAQQSIEASGCEIVTVAVRRFHALHAFTPLINWNRYWLLPNTAGCRTCSEAVRVALLARQLLQHLQQPHQCLIKLEVIPDPLYLLPDPLGTLKAAEILVRKGFAVLPYIYPDPVLALQLEQIGCAAVMPLASPIGSGQGIQHVHSLQLILQNARIPVIIDAGLALPSDASRVMEMGASAVLINSAIALSPSPVSMAHAMKLAVQAGRLAFLAGRMPLSSSAHASSASFGSFL.

Catalysis depends on Lys100, which acts as the Schiff-base intermediate with DXP. 1-deoxy-D-xylulose 5-phosphate is bound by residues Gly161, 187–188, and 209–210; these read AG and NS.

This sequence belongs to the ThiG family. In terms of assembly, homotetramer. Forms heterodimers with either ThiH or ThiS.

Its subcellular location is the plastid. It localises to the chloroplast. The catalysed reaction is [ThiS sulfur-carrier protein]-C-terminal-Gly-aminoethanethioate + 2-iminoacetate + 1-deoxy-D-xylulose 5-phosphate = [ThiS sulfur-carrier protein]-C-terminal Gly-Gly + 2-[(2R,5Z)-2-carboxy-4-methylthiazol-5(2H)-ylidene]ethyl phosphate + 2 H2O + H(+). Its pathway is cofactor biosynthesis; thiamine diphosphate biosynthesis. In terms of biological role, catalyzes the rearrangement of 1-deoxy-D-xylulose 5-phosphate (DXP) to produce the thiazole phosphate moiety of thiamine. Sulfur is provided by the thiocarboxylate moiety of the carrier protein ThiS. In vitro, sulfur can be provided by H(2)S. In Cyanidioschyzon merolae (strain NIES-3377 / 10D) (Unicellular red alga), this protein is Thiazole synthase.